The primary structure comprises 122 residues: UPF0102 protein RHECIAT_CH0000358 (122 aa).

The protein belongs to the UPF0102 family.

The protein is UPF0102 protein RHECIAT_CH0000358 of Rhizobium etli (strain CIAT 652).